The sequence spans 271 residues: Zinc-finger homeodomain protein 8 (271 aa).

Ser16 carries the phosphoserine modification. A ZF-HD dimerization-type; degenerate zinc finger spans residues 56–107; the sequence is YKECLKNHAAGIGGHALDGCGEFMPSPSFNSNDPASLTCAACGCHRNFHRRE. The segment at 125-154 is disordered; sequence HNRHQLPPPPPPHLAGIRSPDDDDSASPPP. Positions 179–242 form a DNA-binding region, homeobox; that stretch reads RKRFRTKFSQ…NNKISGRSGA (64 aa).

As to quaternary structure, homo- and heterodimer with other ZFHD proteins. Interacts with MIF1, MIF2 and MIF3; these interactions prevent nuclear localization and DNA-binding to inhibit transcription regulation activity. Binds to ZHD1, ZHD2, ZHD4, ZHD10 and ZHD11. Interacts with HIPP30. In terms of tissue distribution, mostly expressed in flowers and inflorescence.

Its subcellular location is the nucleus. Functionally, putative transcription factor. This chain is Zinc-finger homeodomain protein 8 (ZHD8), found in Arabidopsis thaliana (Mouse-ear cress).